Here is a 560-residue protein sequence, read N- to C-terminus: Arginine--tRNA ligase (560 aa).

The 'HIGH' region motif lies at Ala-122–His-132.

Belongs to the class-I aminoacyl-tRNA synthetase family.

The protein resides in the cytoplasm. The catalysed reaction is tRNA(Arg) + L-arginine + ATP = L-arginyl-tRNA(Arg) + AMP + diphosphate. In Methanosphaera stadtmanae (strain ATCC 43021 / DSM 3091 / JCM 11832 / MCB-3), this protein is Arginine--tRNA ligase.